We begin with the raw amino-acid sequence, 496 residues long: Alanine aminotransferase 1 (496 aa).

A2 bears the N-acetylalanine mark. T22 bears the Phosphothreonine mark. K314 carries the post-translational modification N6-(pyridoxal phosphate)lysine.

The protein belongs to the class-I pyridoxal-phosphate-dependent aminotransferase family. Alanine aminotransferase subfamily. In terms of assembly, homodimer. It depends on pyridoxal 5'-phosphate as a cofactor. As to expression, liver, kidney, heart, and skeletal muscles. Expressed at moderate levels in the adipose tissue.

It localises to the cytoplasm. It catalyses the reaction L-alanine + 2-oxoglutarate = pyruvate + L-glutamate. The protein operates within amino-acid degradation; L-alanine degradation via transaminase pathway; pyruvate from L-alanine: step 1/1. Functionally, catalyzes the reversible transamination between alanine and 2-oxoglutarate to form pyruvate and glutamate. Participates in cellular nitrogen metabolism and also in liver gluconeogenesis starting with precursors transported from skeletal muscles. This chain is Alanine aminotransferase 1 (GPT), found in Homo sapiens (Human).